The primary structure comprises 283 residues: Pantothenate synthetase (283 aa).

Position 30–37 (30–37 (MGNLHDGH)) interacts with ATP. The active-site Proton donor is the His-37. (R)-pantoate is bound at residue Gln-61. Gln-61 provides a ligand contact to beta-alanine. 149 to 152 (GEKD) provides a ligand contact to ATP. Gln-155 provides a ligand contact to (R)-pantoate. 186-189 (LSSR) provides a ligand contact to ATP.

This sequence belongs to the pantothenate synthetase family. Homodimer.

It localises to the cytoplasm. It catalyses the reaction (R)-pantoate + beta-alanine + ATP = (R)-pantothenate + AMP + diphosphate + H(+). Its pathway is cofactor biosynthesis; (R)-pantothenate biosynthesis; (R)-pantothenate from (R)-pantoate and beta-alanine: step 1/1. Catalyzes the condensation of pantoate with beta-alanine in an ATP-dependent reaction via a pantoyl-adenylate intermediate. This chain is Pantothenate synthetase, found in Escherichia coli O45:K1 (strain S88 / ExPEC).